Consider the following 628-residue polypeptide: Venom redulysin 1 (628 aa).

Residues 1–19 (MSKLWLLLLLVAAFQAVHS) form the signal peptide. The propeptide occupies 20–368 (YPAAESDYLE…EDDVAESDEE (349 aa)). The interval 290–313 (DYEEEEEEEEEEEFELEEDYEEDP) is disordered. Residues 291–313 (YEEEEEEEEEEEFELEEDYEEDP) show a composition bias toward acidic residues.

Belongs to the redulysin-like family. Contains 5 disulfide bonds. Expressed by the venom gland (posterior main gland) (at protein level).

Its subcellular location is the secreted. Functionally, highly abundant protein that may be responsible for the observed disruption of sensory neuron membranes, since it is homologous to proteins such as trialysin, which forms pores in lipid bilayers. Probable insecticidal toxin. The chain is Venom redulysin 1 from Platymeris rhadamanthus (Red spot assassin bug).